A 734-amino-acid chain; its full sequence is Photosystem I P700 chlorophyll a apoprotein A2 (734 aa).

The next 8 membrane-spanning stretches (helical) occupy residues isoleucine 46–alanine 69, leucine 135–glutamine 158, leucine 175–isoleucine 199, isoleucine 273–tyrosine 291, isoleucine 330–tyrosine 353, alanine 369–isoleucine 395, alanine 417–histidine 439, and phenylalanine 517–valine 535. [4Fe-4S] cluster is bound by residues cysteine 559 and cysteine 568. 2 consecutive transmembrane segments (helical) span residues alanine 575–tryptophan 596 and leucine 643–isoleucine 665. Chlorophyll a is bound by residues histidine 654, methionine 662, and tyrosine 670. Tryptophan 671 provides a ligand contact to phylloquinone. A helical membrane pass occupies residues leucine 707–alanine 727.

Belongs to the PsaA/PsaB family. The PsaA/B heterodimer binds the P700 chlorophyll special pair and subsequent electron acceptors. PSI consists of a core antenna complex that captures photons, and an electron transfer chain that converts photonic excitation into a charge separation. The eukaryotic PSI reaction center is composed of at least 11 subunits. P700 is a chlorophyll a/chlorophyll a' dimer, A0 is one or more chlorophyll a, A1 is one or both phylloquinones and FX is a shared 4Fe-4S iron-sulfur center. serves as cofactor.

The protein resides in the plastid. It is found in the chloroplast thylakoid membrane. The catalysed reaction is reduced [plastocyanin] + hnu + oxidized [2Fe-2S]-[ferredoxin] = oxidized [plastocyanin] + reduced [2Fe-2S]-[ferredoxin]. Its function is as follows. PsaA and PsaB bind P700, the primary electron donor of photosystem I (PSI), as well as the electron acceptors A0, A1 and FX. PSI is a plastocyanin-ferredoxin oxidoreductase, converting photonic excitation into a charge separation, which transfers an electron from the donor P700 chlorophyll pair to the spectroscopically characterized acceptors A0, A1, FX, FA and FB in turn. Oxidized P700 is reduced on the lumenal side of the thylakoid membrane by plastocyanin. The sequence is that of Photosystem I P700 chlorophyll a apoprotein A2 from Calycanthus floridus var. glaucus (Eastern sweetshrub).